Consider the following 968-residue polypeptide: Isoleucine--tRNA ligase (968 aa).

Residues 68–78 (PYANGALHMGH) carry the 'HIGH' region motif. Glutamate 582 is a binding site for L-isoleucyl-5'-AMP. A 'KMSKS' region motif is present at residues 623–627 (KMSKS). Lysine 626 contacts ATP. Zn(2+)-binding residues include cysteine 936, cysteine 939, cysteine 956, and cysteine 959.

This sequence belongs to the class-I aminoacyl-tRNA synthetase family. IleS type 1 subfamily. In terms of assembly, monomer. Zn(2+) serves as cofactor.

It localises to the cytoplasm. The catalysed reaction is tRNA(Ile) + L-isoleucine + ATP = L-isoleucyl-tRNA(Ile) + AMP + diphosphate. Catalyzes the attachment of isoleucine to tRNA(Ile). As IleRS can inadvertently accommodate and process structurally similar amino acids such as valine, to avoid such errors it has two additional distinct tRNA(Ile)-dependent editing activities. One activity is designated as 'pretransfer' editing and involves the hydrolysis of activated Val-AMP. The other activity is designated 'posttransfer' editing and involves deacylation of mischarged Val-tRNA(Ile). This is Isoleucine--tRNA ligase from Prochlorococcus marinus (strain AS9601).